The following is an 82-amino-acid chain: MPPCSSKSILSTKSSMFILVSFALLRFIFYFVEFYRLVIGMNNLEIKRMNQKIVRNSERWEDPFDRIISFHYIDNFKKLFIL.

The protein resides in the plastid. It localises to the chloroplast. This is an uncharacterized protein from Vicia faba (Broad bean).